The primary structure comprises 166 residues: Regulatory protein RecX (166 aa).

This sequence belongs to the RecX family.

It localises to the cytoplasm. Modulates RecA activity. The polypeptide is Regulatory protein RecX (Salmonella arizonae (strain ATCC BAA-731 / CDC346-86 / RSK2980)).